The following is a 182-amino-acid chain: Oligoribonuclease (182 aa).

The Exonuclease domain occupies Leu-8–Leu-171. Residue Tyr-129 is part of the active site.

It belongs to the oligoribonuclease family.

Its subcellular location is the cytoplasm. In terms of biological role, 3'-to-5' exoribonuclease specific for small oligoribonucleotides. The polypeptide is Oligoribonuclease (orn) (Haemophilus influenzae (strain ATCC 51907 / DSM 11121 / KW20 / Rd)).